The primary structure comprises 264 residues: DNA-directed RNA polymerase subunit Rpo3 (264 aa).

[3Fe-4S] cluster contacts are provided by C203, C206, and C209.

This sequence belongs to the archaeal Rpo3/eukaryotic RPB3 RNA polymerase subunit family. Part of the RNA polymerase complex. It depends on [3Fe-4S] cluster as a cofactor.

The protein resides in the cytoplasm. It carries out the reaction RNA(n) + a ribonucleoside 5'-triphosphate = RNA(n+1) + diphosphate. Functionally, DNA-dependent RNA polymerase (RNAP) catalyzes the transcription of DNA into RNA using the four ribonucleoside triphosphates as substrates. In Archaeoglobus fulgidus (strain ATCC 49558 / DSM 4304 / JCM 9628 / NBRC 100126 / VC-16), this protein is DNA-directed RNA polymerase subunit Rpo3.